Reading from the N-terminus, the 236-residue chain is MGQKVNPIGLRLGINRNWASRWFPNYQTAPLNISEDHKIRKFLKKELYYAGVSEIIIERTAKKLRVTVVAARPGIIIGKKGADIEKLKEALKKIVDKEISINIKEVKRPQANAQLAAENVTMQLERRVAFRRAMKKVMQAAMKAGAKGIKIKVSGRLAGAEMARTEWYMEGRVPLHTLRAKIDYGFAEAMTTYGIIGAKVWIFKGEVLQKGIQPEKKEEAPARDKEGRGTRRRGRQ.

The KH type-2 domain occupies 39 to 107 (IRKFLKKELY…EISINIKEVK (69 aa)). Positions 213-229 (QPEKKEEAPARDKEGRG) are enriched in basic and acidic residues. The tract at residues 213–236 (QPEKKEEAPARDKEGRGTRRRGRQ) is disordered.

The protein belongs to the universal ribosomal protein uS3 family. In terms of assembly, part of the 30S ribosomal subunit. Forms a tight complex with proteins S10 and S14.

Binds the lower part of the 30S subunit head. Binds mRNA in the 70S ribosome, positioning it for translation. The polypeptide is Small ribosomal subunit protein uS3 (Wolinella succinogenes (strain ATCC 29543 / DSM 1740 / CCUG 13145 / JCM 31913 / LMG 7466 / NCTC 11488 / FDC 602W) (Vibrio succinogenes)).